The sequence spans 103 residues: Large ribosomal subunit protein bL21 (103 aa).

It belongs to the bacterial ribosomal protein bL21 family. In terms of assembly, part of the 50S ribosomal subunit. Contacts protein L20.

Functionally, this protein binds to 23S rRNA in the presence of protein L20. This chain is Large ribosomal subunit protein bL21, found in Polynucleobacter asymbioticus (strain DSM 18221 / CIP 109841 / QLW-P1DMWA-1) (Polynucleobacter necessarius subsp. asymbioticus).